The sequence spans 4306 residues: Cytoplasmic dynein 2 heavy chain 1 (4306 aa).

The tract at residues 1–1650 (MAGSLGDVRK…YVQMVDSELQ (1650 aa)) is stem. 145-152 (LGIVLRKS) serves as a coordination point for ATP. A coiled-coil region spans residues 669 to 696 (KELEGYIQKLQNAAERLATENRRLRKWH). AAA regions lie at residues 1651–1875 (YTYE…VLRG), 1941–2161 (SALK…KQND), 2249–2505 (LTAD…WVLG), and 2617–2862 (HYGR…ESCK). ATP contacts are provided by residues 1689 to 1696 (GPAGTGKT), 1979 to 1986 (GPSGAGKS), 2291 to 2298 (GPEGCGKG), and 2655 to 2662 (GRSGVGRR). Residues 2880 to 3168 (AISSSKKKEL…AEVSKAQETI (289 aa)) are stalk. 3 coiled-coil regions span residues 2896 to 2981 (LQAG…KEVQ), 3108 to 3199 (LETE…LATL), and 3407 to 3441 (IQHE…SLLE). AAA stretches follow at residues 3243–3472 (LCTE…LIQD) and 3689–3904 (MALF…VIDR).

This sequence belongs to the dynein heavy chain family. As to quaternary structure, the cytoplasmic dynein complex 2 is probably composed by a heavy chain DYNC2H1 homodimer and a number of DYNC2LI1 light intermediate chains. Detected in brain, lung, spleen and kidney (at protein level). Enriched in the ependymal layer lining the lateral ventricles (at protein level).

Its subcellular location is the cytoplasm. It localises to the cytoskeleton. The protein localises to the cilium axoneme. It is found in the cell membrane. In terms of biological role, may function as a motor for intraflagellar retrograde transport. Functions in cilia biogenesis. According to PubMed:8666668, it may play a role in transport between endoplasmic reticulum and Golgi or organization of the Golgi in cells. The protein is Cytoplasmic dynein 2 heavy chain 1 (Dync2h1) of Mus musculus (Mouse).